A 125-amino-acid chain; its full sequence is Large ribosomal subunit protein bL12 (125 aa).

Belongs to the bacterial ribosomal protein bL12 family. In terms of assembly, homodimer. Part of the ribosomal stalk of the 50S ribosomal subunit. Forms a multimeric L10(L12)X complex, where L10 forms an elongated spine to which 2 to 4 L12 dimers bind in a sequential fashion. Binds GTP-bound translation factors.

Its function is as follows. Forms part of the ribosomal stalk which helps the ribosome interact with GTP-bound translation factors. Is thus essential for accurate translation. In Campylobacter jejuni subsp. jejuni serotype O:2 (strain ATCC 700819 / NCTC 11168), this protein is Large ribosomal subunit protein bL12.